A 158-amino-acid chain; its full sequence is MAQPQNDQAQPPPATLTNPRFTLELEFVSSLANPYYLSHLAVNYPSLLGISKSGNENEVNDDNSDPDAEAFAAYLAYLYSYWKTPEYSQFLTHPGATLRALRLLQEEKFRRDIIRPQVIERLAGVDLNGEQSAAEAGEQNTEQNKGDRGNVENQHGKT.

The interval 130–158 (EQSAAEAGEQNTEQNKGDRGNVENQHGKT) is disordered.

Belongs to the Mediator complex subunit 31 family. In terms of assembly, component of the Mediator complex.

Its subcellular location is the nucleus. Functionally, component of the Mediator complex, a coactivator involved in the regulated transcription of nearly all RNA polymerase II-dependent genes. Mediator functions as a bridge to convey information from gene-specific regulatory proteins to the basal RNA polymerase II transcription machinery. Mediator is recruited to promoters by direct interactions with regulatory proteins and serves as a scaffold for the assembly of a functional preinitiation complex with RNA polymerase II and the general transcription factors. The sequence is that of Mediator of RNA polymerase II transcription subunit 31 (soh1) from Emericella nidulans (strain FGSC A4 / ATCC 38163 / CBS 112.46 / NRRL 194 / M139) (Aspergillus nidulans).